We begin with the raw amino-acid sequence, 397 residues long: Tryptophan synthase beta chain (397 aa).

At Lys87 the chain carries N6-(pyridoxal phosphate)lysine.

It belongs to the TrpB family. In terms of assembly, tetramer of two alpha and two beta chains. Requires pyridoxal 5'-phosphate as cofactor.

The catalysed reaction is (1S,2R)-1-C-(indol-3-yl)glycerol 3-phosphate + L-serine = D-glyceraldehyde 3-phosphate + L-tryptophan + H2O. The protein operates within amino-acid biosynthesis; L-tryptophan biosynthesis; L-tryptophan from chorismate: step 5/5. Its function is as follows. The beta subunit is responsible for the synthesis of L-tryptophan from indole and L-serine. The chain is Tryptophan synthase beta chain from Escherichia coli O127:H6 (strain E2348/69 / EPEC).